The primary structure comprises 613 residues: MAEGVFSGAIGIDLGTTYSCVATYESSVEIIANEQGNRVTPSFVAFTPEERLIGDAAKNQAALNPRNTVFDAKRLIGRRFDDESVQSDMKTWPFKVIDANGSPMIEVEYLGETKSFSPQEISAMVLTKMKEIAEAKIGKKVEKAVITVPAYFNDAQRQATKDAGAIAGLNVLRIINEPTAAAIAYGLGAGKSEKERHVLIFDLGGGTFDVSLLNIAGGVYTVKSTSGNTHLGGQDFDTNLLEHFKAEFKKKTGLDISGDARALRRLRTAAERAKRTLSSVTQTTVEVDSLFEGEDFETSITRARFEDINAALFKSTLEPVEQVLKDAQISKSQIDEVVLVGGSTRIPKVQKLLSDFFEGKQLEKSINPDEAVAYGAAVQAAILTGSNLSDDTKDLLLLDVAPLSLGVAMQGDVFACVIPRNTTVPTIKRRTFTTVHDGQTTVTFPVYQGERVNCKDNTLLGEFDLKGIPPLPAGEPVLEAIFEVDANGILKVTAVEKSTGKTANITISNAIGRLSSEDIEKMVSQAEEFKAADEAFAKRHEARQRLESYVSSIEQTVSDPVLSAKMKKGAKSKVEAALADAFSALQIEESSAEDYRKAEIGLKRVVTKAMATR.

Residues 1 to 391 (MAEGVFSGAI…ILTGSNLSDD (391 aa)) are nucleotide binding domain (NBD). ATP contacts are provided by residues 16 to 18 (TTY), K73, 205 to 207 (GGT), 271 to 278 (ERAKRTLS), and G342. Residues 392–402 (TKDLLLLDVAP) form an inter-domain linker region. Residues 403-613 (LSLGVAMQGD…RVVTKAMATR (211 aa)) form a substrate binding domain (SBD) region. The segment at 516–612 (SEDIEKMVSQ…KRVVTKAMAT (97 aa)) is lid domain (SBDalpha). The Nuclear export signal signature appears at 574–582 (VEAALADAF).

Belongs to the heat shock protein 70 family. Ssb-type Hsp70 subfamily. In terms of assembly, binds to ribosomes. Binds close to the ribosomal tunnel exit via contacts with both ribosomal proteins and rRNA. Directly interacts with nascent polypeptides. This interaction is dependent on the ribosome-associated complex (RAC). Interacts with SSE1. Interacts with FES1.

It localises to the cytoplasm. It catalyses the reaction ATP + H2O = ADP + phosphate + H(+). Ribosome-bound, Hsp70-type chaperone that assists in the cotranslational folding of newly synthesized proteins in the cytosol. Stimulates folding by interacting with nascent chains, binding to short, largely hydrophobic sequences exposed by unfolded proteins, thereby stabilizing longer, more slowly translated, and aggregation-prone nascent polypeptides and domains that cannot fold stably until fully synthesized. The Hsp70-protein substrate interaction depends on ATP-binding and on allosteric regulation between the NBD and the SBD. The ATP-bound state is characterized by a fast exchange rate of substrate (low affinity state), while in the ADP-bound state exchange is much slower (high affinity state). During the Hsp70 cycle, the chaperone switches between the ATP-bound state (open conformation) and the ADP-bound state (closed conformation) by major conformational rearrangements involving mainly the lid domain. Ssb cooperates with a specific Hsp40/Hsp70 co-chaperone termed the ribosome-associated complex (RAC), which stimulates the ATPase activity of the ribosome-associated pool of Ssbs and switches it to the high affinity substrate binding state. Hsp110 chaperone SSE1 and FES1 act as nucleotide exchange factors that cause substrate release. In Eremothecium gossypii (strain ATCC 10895 / CBS 109.51 / FGSC 9923 / NRRL Y-1056) (Yeast), this protein is Ribosome-associated molecular chaperone SSB1 (SSB1).